The primary structure comprises 1203 residues: DNA-directed RNA polymerase subunit beta' (1203 aa).

The Zn(2+) site is built by C60, C62, C75, and C78. The Mg(2+) site is built by D449, D451, and D453. Residues C818, C892, C899, and C902 each coordinate Zn(2+).

This sequence belongs to the RNA polymerase beta' chain family. In terms of assembly, the RNAP catalytic core consists of 2 alpha, 1 beta, 1 beta' and 1 omega subunit. When a sigma factor is associated with the core the holoenzyme is formed, which can initiate transcription. Mg(2+) is required as a cofactor. Zn(2+) serves as cofactor.

The enzyme catalyses RNA(n) + a ribonucleoside 5'-triphosphate = RNA(n+1) + diphosphate. DNA-dependent RNA polymerase catalyzes the transcription of DNA into RNA using the four ribonucleoside triphosphates as substrates. This chain is DNA-directed RNA polymerase subunit beta', found in Bacillus mycoides (strain KBAB4) (Bacillus weihenstephanensis).